A 244-amino-acid polypeptide reads, in one-letter code: tRNA pseudouridine synthase A (244 aa).

Catalysis depends on aspartate 52, which acts as the Nucleophile. Position 110 (tyrosine 110) interacts with substrate.

The protein belongs to the tRNA pseudouridine synthase TruA family. In terms of assembly, homodimer.

The catalysed reaction is uridine(38/39/40) in tRNA = pseudouridine(38/39/40) in tRNA. Functionally, formation of pseudouridine at positions 38, 39 and 40 in the anticodon stem and loop of transfer RNAs. The sequence is that of tRNA pseudouridine synthase A from Pelobacter propionicus (strain DSM 2379 / NBRC 103807 / OttBd1).